The chain runs to 618 residues: Two-component response regulator-like APRR1 (618 aa).

The 119-residue stretch at 20-138 (RILLCDNDST…ELLNLWTHMW (119 aa)) folds into the Response regulatory domain. Composition is skewed to polar residues over residues 161 to 174 (SDQS…TNLF), 187 to 200 (NPQR…ENEW), 246 to 257 (RNSNPAQFSSAP), 324 to 334 (PKSTVLRTNGQ), and 375 to 389 (TEQY…QNGA). Disordered regions lie at residues 161-200 (SDQS…ENEW), 239-260 (SHHE…PKKS), 316-338 (TKQA…DPPL), 368-395 (QAHR…PHSL), and 573-618 (VRKM…ALGT). The region spanning 533-575 (REEALLKFRRKRNQRCFDKKIRYVNRKRLAERRPRVKGQFVRK) is the CCT domain. A coiled-coil region spans residues 588–610 (DSADYDDEEEEEEEEEEENRDSS). A compositionally biased stretch (acidic residues) spans 590-606 (ADYDDEEEEEEEEEEEN).

Belongs to the ARR-like family. Interacts with PIF1, PIL2, PIF3, PIF4, PIL5, PIL6, ABI3 (via C-terminus), ADO1/ZTL, ADO2, APRR3 and TCP21/CHE. Both the phosphorylated and the dephosphorylated forms interact with ADO1/ZLT. Phosphorylated; during the day. Phosphorylation is required for optimal interaction with APRR3. Expressed in leaves, flowers and siliques. Restricted to the vasculature.

Its subcellular location is the nucleus. Functionally, controls photoperiodic flowering response. Component of the circadian clock. Expression of several members of the ARR-like family is controlled by circadian rhythm. The particular coordinated sequential expression of APRR9, APRR7, APRR5, APRR3 and APPR1 result to circadian waves that may be at the basis of the endogenous circadian clock. Positive regulator of CCA1 and LHY expression. The polypeptide is Two-component response regulator-like APRR1 (APRR1) (Arabidopsis thaliana (Mouse-ear cress)).